We begin with the raw amino-acid sequence, 466 residues long: UDP-N-acetylmuramoylalanine--D-glutamate ligase (466 aa).

Residue 121–127 (GTNGKST) participates in ATP binding.

It belongs to the MurCDEF family.

It localises to the cytoplasm. It catalyses the reaction UDP-N-acetyl-alpha-D-muramoyl-L-alanine + D-glutamate + ATP = UDP-N-acetyl-alpha-D-muramoyl-L-alanyl-D-glutamate + ADP + phosphate + H(+). It functions in the pathway cell wall biogenesis; peptidoglycan biosynthesis. In terms of biological role, cell wall formation. Catalyzes the addition of glutamate to the nucleotide precursor UDP-N-acetylmuramoyl-L-alanine (UMA). This is UDP-N-acetylmuramoylalanine--D-glutamate ligase from Nitrobacter winogradskyi (strain ATCC 25391 / DSM 10237 / CIP 104748 / NCIMB 11846 / Nb-255).